The following is a 532-amino-acid chain: Vesicular acetylcholine transporter unc-17 (532 aa).

The Cytoplasmic segment spans residues 1 to 31; it reads MGFNVPVINRDSEILKADAKKWLEQQDNQKK. Residues 32–52 form a helical membrane-spanning segment; that stretch reads CVLVIVSIALLLDNMLYMVIV. The Lumenal, vesicle portion of the chain corresponds to 53 to 101; that stretch reads PIIPKYLRDIHNYQVTFEGYHNETSQLANGTYLVREVGGRINFLDEELE. N-linked (GlcNAc...) asparagine glycosylation is found at N74 and N81. A helical transmembrane segment spans residues 102 to 121; the sequence is LGWLFASKALLQIFVNPFSG. The Cytoplasmic segment spans residues 122–130; the sequence is YIIDRVGYE. The chain crosses the membrane as a helical span at residues 131 to 151; the sequence is IPMILGLCTMFFSTAIFALGK. The Lumenal, vesicle portion of the chain corresponds to 152 to 160; that stretch reads SYGVLLFAR. A helical membrane pass occupies residues 161–180; that stretch reads SLQGFGSAFADTSGLAMIAD. Over 181–191 the chain is Cytoplasmic; sequence RFTEENERSAA. A helical transmembrane segment spans residues 192–213; sequence LGIALAFISFGCLVAPPFGSVL. Residues 214 to 219 lie on the Lumenal, vesicle side of the membrane; it reads YSLAGK. Residues 220-242 form a helical membrane-spanning segment; sequence PVPFLILSFVCLADAIAVFMVIN. Residues 243–266 are Cytoplasmic-facing; that stretch reads PHRRGTDSHGEKVQGTPMWRLFMD. The chain crosses the membrane as a helical span at residues 267 to 286; the sequence is PFIACCSGALIMANVSLAFL. Topologically, residues 287 to 303 are lumenal, vesicle; it reads EPTITTWMSEMMPDTPG. A helical membrane pass occupies residues 304-328; sequence WLVGVIWLPPFFPHVLGVYVTVKML. Residues 329 to 335 are Cytoplasmic-facing; that stretch reads RAFPHHT. Residues 336–356 form a helical membrane-spanning segment; it reads WAIAMVGLAMEGIACFAIPYT. At 357–367 the chain is on the lumenal, vesicle side; sequence TSVMQLVIPLS. The chain crosses the membrane as a helical span at residues 368 to 388; it reads FVCFGIALIDTSLLPMLGHLV. The Cytoplasmic portion of the chain corresponds to 389-393; that stretch reads DTRHV. Residues 394–412 form a helical membrane-spanning segment; sequence SVYGSVYAIADISYSLAYA. Residues 413–418 lie on the Lumenal, vesicle side of the membrane; sequence FGPIIA. Residues 419 to 440 form a helical membrane-spanning segment; the sequence is GWIVTNWGFTALNIIIFATNVT. The Cytoplasmic segment spans residues 441-532; the sequence is YAPVLFLLRK…AGYDPLNPQW (92 aa).

It belongs to the major facilitator superfamily. Vesicular transporter family. Detected in most regions of the nervous system including the nerve ring, the ventral and dorsal nerve cords, and the pharyngeal nervous system. Expressed in most cholinergic neurons. In addition, expressed in SIA, SIB and SMB sublateral motor neurons.

The protein resides in the cytoplasmic vesicle. It is found in the secretory vesicle. It localises to the synaptic vesicle membrane. Its function is as follows. Involved in acetylcholine transport into synaptic vesicles. The sequence is that of Vesicular acetylcholine transporter unc-17 from Caenorhabditis elegans.